Here is a 332-residue protein sequence, read N- to C-terminus: D-alanine--D-alanine ligase (332 aa).

A compositionally biased stretch (polar residues) spans 1 to 17; that stretch reads MPMTMTQSATNPTATPV. The interval 1 to 28 is disordered; sequence MPMTMTQSATNPTATPVSANKASANAAT. Residues 18 to 28 are compositionally biased toward low complexity; that stretch reads SANKASANAAT. In terms of domain architecture, ATP-grasp spans 132 to 329; the sequence is KQLWHGCGLS…FEQLCWHILA (198 aa). 158-213 lines the ATP pocket; that stretch reads VNTLGLPLIVKPVHEGSSIGMSKVNTLDELPKAYEVAAGCGDVVMAEKWITGREFT. Aspartate 283, glutamate 296, and asparagine 298 together coordinate Mg(2+).

The protein belongs to the D-alanine--D-alanine ligase family. Mg(2+) is required as a cofactor. The cofactor is Mn(2+).

The protein resides in the cytoplasm. The catalysed reaction is 2 D-alanine + ATP = D-alanyl-D-alanine + ADP + phosphate + H(+). It participates in cell wall biogenesis; peptidoglycan biosynthesis. In terms of biological role, cell wall formation. The sequence is that of D-alanine--D-alanine ligase from Psychrobacter sp. (strain PRwf-1).